Consider the following 374-residue polypeptide: MSVALFCGPPPAVSFGCKDGRGRKGMVRSKDIVRQTVKPPAHACRLIGWNKYPGSVVPTNSSLSPSPTALDDEIELDLSPFLIIYKDGRIERLKGTTVIPACPEVATKDVIIDPATGVSVRLYLPNVVDLPSKKLPVLVYFHGGGFVIENTGSPNYHNYLTLLAAKSGLLIVSVNYRLAPEHPIPASFDDCMAGFNWVVSHSAGPAPEPWLARHGDLTQILISGDSAGGTVTHYVLLRADAGVIEGAALVHPYFLGSKRLENQTEEDFEFHEKLWRLSTPDTEGLDDPLINPLAPGAPSLAGLKCKRAVVFVAELDFLVERGRMYYDALVKSGWGGKAELVHQEGVGHVFHLSDYSGDVSVDMMAKMVAFLRGE.

The transit peptide at 1–68 directs the protein to the amyloplast; the sequence is MSVALFCGPP…TNSSLSPSPT (68 aa). The active-site Acyl-ester intermediate is the Ser-226. Catalysis depends on charge relay system residues Asp-316 and His-348.

This sequence belongs to the AB hydrolase superfamily. In terms of assembly, homodimer. As to expression, highly expressed in pistil and bulb scales. Lower expression in stem, and barely detected in root, leaf, petal and stamen.

The protein localises to the plastid. It is found in the amyloplast. It catalyses the reaction 6-tuliposide A = tulipalin A + D-glucose. Functionally, lactone-forming carboxylesterases, specifically catalyzing intramolecular transesterification, but not hydrolysis. Involved in the biosynthesis of tulipalins, defensive chemicals that show antimicrobial activities against a broad range of strains of bacteria and fungi. Substrates are 6-tuliposide A &gt; 6-tuliposide B. This chain is Tuliposide A-converting enzyme b1, amyloplastic (TCEA-B1), found in Tulipa gesneriana (Garden tulip).